Here is a 251-residue protein sequence, read N- to C-terminus: Methylthioribulose-1-phosphate dehydratase (251 aa).

The disordered stretch occupies residues 1-26 (MTSVCDATNEDKENGSESTESQDKEH). Over residues 9 to 26 (NEDKENGSESTESQDKEH) the composition is skewed to basic and acidic residues. Cys-100 serves as a coordination point for substrate. Positions 118 and 120 each coordinate Zn(2+). Residue Glu-142 is the Proton donor/acceptor of the active site. His-198 provides a ligand contact to Zn(2+). A disordered region spans residues 232–251 (MDPSAPPIEENHYYDVQQSQ).

Belongs to the aldolase class II family. MtnB subfamily. The cofactor is Zn(2+).

Its subcellular location is the cytoplasm. The enzyme catalyses 5-(methylsulfanyl)-D-ribulose 1-phosphate = 5-methylsulfanyl-2,3-dioxopentyl phosphate + H2O. The protein operates within amino-acid biosynthesis; L-methionine biosynthesis via salvage pathway; L-methionine from S-methyl-5-thio-alpha-D-ribose 1-phosphate: step 2/6. Its function is as follows. Catalyzes the dehydration of methylthioribulose-1-phosphate (MTRu-1-P) into 2,3-diketo-5-methylthiopentyl-1-phosphate (DK-MTP-1-P). Functions in the methionine salvage pathway. May play a role in apoptosis. The polypeptide is Methylthioribulose-1-phosphate dehydratase (Salmo salar (Atlantic salmon)).